The following is a 138-amino-acid chain: ATP synthase epsilon chain (138 aa).

It belongs to the ATPase epsilon chain family. As to quaternary structure, F-type ATPases have 2 components, CF(1) - the catalytic core - and CF(0) - the membrane proton channel. CF(1) has five subunits: alpha(3), beta(3), gamma(1), delta(1), epsilon(1). CF(0) has three main subunits: a, b and c.

The protein localises to the cell membrane. Its function is as follows. Produces ATP from ADP in the presence of a proton gradient across the membrane. The protein is ATP synthase epsilon chain of Streptococcus suis (strain 98HAH33).